Here is a 650-residue protein sequence, read N- to C-terminus: DNA gyrase subunit B (650 aa).

The Toprim domain maps to Asn429–Pro543. Mg(2+)-binding residues include Glu435, Asp508, and Asp510.

The protein belongs to the type II topoisomerase GyrB family. In terms of assembly, heterotetramer, composed of two GyrA and two GyrB chains. In the heterotetramer, GyrA contains the active site tyrosine that forms a transient covalent intermediate with DNA, while GyrB binds cofactors and catalyzes ATP hydrolysis. Requires Mg(2+) as cofactor. Mn(2+) is required as a cofactor. Ca(2+) serves as cofactor.

It is found in the cytoplasm. It carries out the reaction ATP-dependent breakage, passage and rejoining of double-stranded DNA.. A type II topoisomerase that negatively supercoils closed circular double-stranded (ds) DNA in an ATP-dependent manner to modulate DNA topology and maintain chromosomes in an underwound state. Negative supercoiling favors strand separation, and DNA replication, transcription, recombination and repair, all of which involve strand separation. Also able to catalyze the interconversion of other topological isomers of dsDNA rings, including catenanes and knotted rings. Type II topoisomerases break and join 2 DNA strands simultaneously in an ATP-dependent manner. The chain is DNA gyrase subunit B from Streptococcus pyogenes serotype M18 (strain MGAS8232).